A 150-amino-acid chain; its full sequence is Leukotriene C4 synthase (150 aa).

Residues 1–6 (MKDEVA) lie on the Cytoplasmic side of the membrane. The helical transmembrane segment at 7–27 (LLASVTLLGVLLQAYFSLQVI) threads the bilayer. Residues 28 to 48 (SARRAFRVSPPLTTGPPEFER) lie on the Lumenal side of the membrane. Arginine 30 provides a ligand contact to glutathione. Arginine 31 functions as the Proton donor in the catalytic mechanism. A Phosphoserine modification is found at serine 36. The chain crosses the membrane as a helical span at residues 49–69 (IYRAQVNCSEYFPLFLAMLWV). Glutathione-binding positions include 51–55 (RAQVN) and 58–59 (EY). Topologically, residues 70–73 (AGIF) are cytoplasmic. A helical membrane pass occupies residues 74–94 (FHEGAAALCGLVYLFARLRYF). Residue 93-97 (YFQGY) coordinates glutathione. At 95–104 (QGYARSAQQR) the chain is on the lumenal side. The active-site Proton acceptor is arginine 104. Residues 105–124 (LAPLYASARALWLLVALAAL) form a helical membrane-spanning segment. Topologically, residues 125–150 (GLLAHFLPAELRAALLGQLRKLLLRS) are cytoplasmic.

The protein belongs to the MAPEG family. Homotrimer. Interacts with ALOX5AP and ALOX5. In terms of processing, phosphorylation at Ser-36 by RPS6KB1 inhibits the leukotriene-C4 synthase activity.

Its subcellular location is the nucleus outer membrane. It is found in the endoplasmic reticulum membrane. The protein localises to the nucleus membrane. It catalyses the reaction leukotriene C4 = leukotriene A4 + glutathione. It carries out the reaction (13S,14S)-epoxy-(4Z,7Z,9E,11E,16Z,19Z)-docosahexaenoate + glutathione = (13R)-S-glutathionyl-(14S)-hydroxy-(4Z,7Z,9E,11E,16Z,19Z)-docosahexaenoate. The protein operates within lipid metabolism; leukotriene C4 biosynthesis. Inhibited by MK886. Its function is as follows. Catalyzes the conjugation of leukotriene A4 with reduced glutathione (GSH) to form leukotriene C4 with high specificity. Can also catalyze the transfer of a glutathionyl group from glutathione (GSH) to 13(S),14(S)-epoxy-docosahexaenoic acid to form maresin conjugate in tissue regeneration 1 (MCTR1), a bioactive lipid mediator that possess potent anti-inflammatory and proresolving actions. The sequence is that of Leukotriene C4 synthase (LTC4S) from Bos taurus (Bovine).